The sequence spans 48 residues: Small, acid-soluble spore protein G (48 aa).

The span at 1–16 (MSENRHENEENRRDAA) shows a compositional bias: basic and acidic residues. Residues 1–48 (MSENRHENEENRRDAAVAKVQNSGNAKVVVSVNTDQDQAQAQSQDGED) form a disordered region. A compositionally biased stretch (low complexity) spans 35 to 48 (DQDQAQAQSQDGED).

This chain is Small, acid-soluble spore protein G (sspG), found in Bacillus subtilis (strain 168).